The primary structure comprises 358 residues: MTATLTLETMTSEEEYGPRNCVVCGDRATGYHFHALTCEGCKGFFRRTVSKTIGPICPFAGRCEVSKAQRRHCPACRLQKCLNVGMRKDMILSAEALALRRARQARRRAQKASLQLSQQQKELIQTLLGAHTRHVGPMFDQFVQFRPPAYLFSHHRPFQPLAPVLPLLTHFADINTFMVQQIIKFTKDLPLFRSLTMEDQISLLKGAAVEILHISLNTTFCLQTQNFFCGPLCYKMEDAVHVGFQYEFLELIIHFHKTLKRLQLQEPEYALMAAMALFSPDRPGVTQREEIDQLQEEVALILNNHIMEQQSRLQSRFLYAKLMGLLAELRSINSAYSYEIHRIQGLSAMMPLLGEICS.

Positions 18 to 93 (PRNCVVCGDR…VGMRKDMILS (76 aa)) form a DNA-binding region, nuclear receptor. The segment at 21 to 41 (CVVCGDRATGYHFHALTCEGC) adopts an NR C4-type zinc-finger fold. A Phosphothreonine; by PKC modification is found at Thr48. The segment at 57 to 81 (CPFAGRCEVSKAQRRHCPACRLQKC) adopts an NR C4-type zinc-finger fold. The 240-residue stretch at 119 to 358 (QQKELIQTLL…MMPLLGEICS (240 aa)) folds into the NR LBD domain.

Belongs to the nuclear hormone receptor family. NR1 subfamily. As to quaternary structure, heterodimer of NR1I3 and RXR. Interacts with PSMC4. Interacts with ECT2. Directly interacts with DNAJC7; this complex may also include HSP90. Interacts with CRY1. Interacts with CRY2 in a ligand-dependent manner. Post-translationally, phosphorylated at Thr-48 by PKC, dephosphorylation of Thr-48 is required for nuclear translocation and activation.

The protein localises to the nucleus. The protein resides in the cytoplasm. It localises to the cytoskeleton. In terms of biological role, binds and transactivates the retinoic acid response elements that control expression of the retinoic acid receptor beta 2 and alcohol dehydrogenase 3 genes. Transactivates both the phenobarbital responsive element module of the human CYP2B6 gene and the CYP3A4 xenobiotic response element. In Rattus norvegicus (Rat), this protein is Nuclear receptor subfamily 1 group I member 3 (Nr1i3).